The following is a 386-amino-acid chain: Protein lin-8 (386 aa).

The sufficient for interaction with lin-35 stretch occupies residues 175–285 (LGLEARRASK…FSQQYGGGGS (111 aa)). The tract at residues 212–240 (EEPYEETGSNWSDPAPEPSQSKSQSPEAK) is disordered. The span at 229-240 (PSQSKSQSPEAK) shows a compositional bias: low complexity.

It belongs to the lin-8 family. In terms of assembly, interacts with lin-35 (via C-terminus). As to expression, widely expressed throughout development, with particularly prominent expression in the germline and in neuronal nuclei of the head (at protein level).

The protein localises to the nucleus. Functionally, acts as a synthetic multivulva class A (synMuvA) protein and redundantly inhibits lin-3/EGF expression to prevent inappropriate vulva induction. In Caenorhabditis elegans, this protein is Protein lin-8.